Reading from the N-terminus, the 373-residue chain is Protein phosphatase 1K, mitochondrial (373 aa).

In terms of domain architecture, PPM-type phosphatase spans 95–347 (KVGCSTQLGK…DNSTAIVVPF (253 aa)). Aspartate 128, glycine 129, and aspartate 338 together coordinate Mg(2+).

Belongs to the PP2C family. Mg(2+) serves as cofactor. Mn(2+) is required as a cofactor.

Its subcellular location is the mitochondrion matrix. It catalyses the reaction O-phospho-L-seryl-[protein] + H2O = L-seryl-[protein] + phosphate. It carries out the reaction O-phospho-L-threonyl-[protein] + H2O = L-threonyl-[protein] + phosphate. In Xenopus laevis (African clawed frog), this protein is Protein phosphatase 1K, mitochondrial (ppm1k).